An 862-amino-acid chain; its full sequence is Leucine--tRNA ligase (862 aa).

The 'HIGH' region motif lies at 49 to 59 (PYPSGRIHMGH). The short motif at 625–629 (KMSKS) is the 'KMSKS' region element. Lys-628 contacts ATP.

Belongs to the class-I aminoacyl-tRNA synthetase family.

Its subcellular location is the cytoplasm. It carries out the reaction tRNA(Leu) + L-leucine + ATP = L-leucyl-tRNA(Leu) + AMP + diphosphate. This is Leucine--tRNA ligase from Paramagnetospirillum magneticum (strain ATCC 700264 / AMB-1) (Magnetospirillum magneticum).